A 507-amino-acid polypeptide reads, in one-letter code: Protein FAM221B (507 aa).

Disordered regions lie at residues 1–100 (MEAD…SAQS), 154–310 (LLSP…ESRP), and 486–507 (ETKR…HRPF). A compositionally biased stretch (polar residues) spans 88–100 (NLPSTPSQSSAQS). The segment covering 167 to 177 (SISDVQEEPLE) has biased composition (acidic residues). Polar residues predominate over residues 182 to 193 (ADISETEYSISD). 2 stretches are compositionally biased toward acidic residues: residues 208-222 (PESE…EEPL) and 270-281 (SADEEEAEEEEL). Ser-270 is subject to Phosphoserine.

This sequence belongs to the FAM221 family.

The polypeptide is Protein FAM221B (Fam221b) (Rattus norvegicus (Rat)).